Consider the following 486-residue polypeptide: Ribulose bisphosphate carboxylase large chain (486 aa).

Positions 1–2 (MS) are excised as a propeptide. 2 residues coordinate substrate: asparagine 123 and threonine 173. Residue lysine 175 is the Proton acceptor of the active site. Position 177 (lysine 177) interacts with substrate. Positions 201, 203, and 204 each coordinate Mg(2+). At lysine 201 the chain carries N6-carboxylysine. Serine 208 is modified (phosphoserine). Catalysis depends on histidine 294, which acts as the Proton acceptor. Substrate is bound by residues arginine 295 and histidine 327. Phosphothreonine is present on threonine 330. Substrate is bound at residue serine 379.

This sequence belongs to the RuBisCO large chain family. Type I subfamily. In terms of assembly, heterohexadecamer of 8 large chains and 8 small chains; disulfide-linked. The disulfide link is formed within the large subunit homodimers. It depends on Mg(2+) as a cofactor. Post-translationally, the disulfide bond which can form in the large chain dimeric partners within the hexadecamer appears to be associated with oxidative stress and protein turnover.

It localises to the plastid. The protein resides in the chloroplast. It carries out the reaction 2 (2R)-3-phosphoglycerate + 2 H(+) = D-ribulose 1,5-bisphosphate + CO2 + H2O. It catalyses the reaction D-ribulose 1,5-bisphosphate + O2 = 2-phosphoglycolate + (2R)-3-phosphoglycerate + 2 H(+). RuBisCO catalyzes two reactions: the carboxylation of D-ribulose 1,5-bisphosphate, the primary event in carbon dioxide fixation, as well as the oxidative fragmentation of the pentose substrate in the photorespiration process. Both reactions occur simultaneously and in competition at the same active site. The protein is Ribulose bisphosphate carboxylase large chain of Aethionema grandiflorum (Persian stone-cress).